The chain runs to 104 residues: Cytochrome c-552 (104 aa).

The first 23 residues, 1–23 (MHLHLRGICLVLAVASSSSSALA), serve as a signal peptide directing secretion. Heme c contacts are provided by Cys-37, Cys-40, His-41, and Met-82.

The protein belongs to the cytochrome c family. In terms of assembly, monoheme monomer. Has the tendency to dimerize. In terms of processing, binds 1 heme c group covalently per subunit.

Its subcellular location is the periplasm. The protein is Cytochrome c-552 (cycB) of Bradyrhizobium diazoefficiens (strain JCM 10833 / BCRC 13528 / IAM 13628 / NBRC 14792 / USDA 110).